Reading from the N-terminus, the 165-residue chain is Cyclic pyranopterin monophosphate synthase (165 aa).

Substrate is bound by residues 75–77 (MCH) and 115–116 (ME). D130 is an active-site residue.

It belongs to the MoaC family. As to quaternary structure, homohexamer; trimer of dimers.

The enzyme catalyses (8S)-3',8-cyclo-7,8-dihydroguanosine 5'-triphosphate = cyclic pyranopterin phosphate + diphosphate. It functions in the pathway cofactor biosynthesis; molybdopterin biosynthesis. In terms of biological role, catalyzes the conversion of (8S)-3',8-cyclo-7,8-dihydroguanosine 5'-triphosphate to cyclic pyranopterin monophosphate (cPMP). The protein is Cyclic pyranopterin monophosphate synthase of Halalkalibacterium halodurans (strain ATCC BAA-125 / DSM 18197 / FERM 7344 / JCM 9153 / C-125) (Bacillus halodurans).